Here is a 414-residue protein sequence, read N- to C-terminus: Enolase (414 aa).

Gln-162 serves as a coordination point for (2R)-2-phosphoglycerate. Glu-204 acts as the Proton donor in catalysis. Mg(2+)-binding residues include Asp-239, Glu-280, and Asp-307. (2R)-2-phosphoglycerate-binding residues include Lys-332, Arg-361, Ser-362, and Lys-383. Lys-332 (proton acceptor) is an active-site residue.

It belongs to the enolase family. The cofactor is Mg(2+).

The protein localises to the cytoplasm. The protein resides in the secreted. Its subcellular location is the cell surface. It carries out the reaction (2R)-2-phosphoglycerate = phosphoenolpyruvate + H2O. Its pathway is carbohydrate degradation; glycolysis; pyruvate from D-glyceraldehyde 3-phosphate: step 4/5. Functionally, catalyzes the reversible conversion of 2-phosphoglycerate (2-PG) into phosphoenolpyruvate (PEP). It is essential for the degradation of carbohydrates via glycolysis. The sequence is that of Enolase from Campylobacter jejuni subsp. jejuni serotype O:2 (strain ATCC 700819 / NCTC 11168).